The chain runs to 253 residues: 2-C-methyl-D-erythritol 4-phosphate cytidylyltransferase (253 aa).

It belongs to the IspD/TarI cytidylyltransferase family. IspD subfamily.

The enzyme catalyses 2-C-methyl-D-erythritol 4-phosphate + CTP + H(+) = 4-CDP-2-C-methyl-D-erythritol + diphosphate. Its pathway is isoprenoid biosynthesis; isopentenyl diphosphate biosynthesis via DXP pathway; isopentenyl diphosphate from 1-deoxy-D-xylulose 5-phosphate: step 2/6. Functionally, catalyzes the formation of 4-diphosphocytidyl-2-C-methyl-D-erythritol from CTP and 2-C-methyl-D-erythritol 4-phosphate (MEP). The sequence is that of 2-C-methyl-D-erythritol 4-phosphate cytidylyltransferase from Chlorobium chlorochromatii (strain CaD3).